The sequence spans 455 residues: Keratin, type I cuticular Ha5 (455 aa).

The segment at 1-97 (MASKCLKASF…FGEGILTGNE (97 aa)) is head. The IF rod domain occupies 97-408 (EKETMQFLND…GLLDSEDCKL (312 aa)). A coil 1A region spans residues 98–132 (KETMQFLNDRLASYLEKVRQLERENAELESRIRDW). Residues 133–143 (CEQQVPYLCPD) form a linker 1 region. The tract at residues 144 to 244 (YQSYFQTIEE…HEEEVNSLRC (101 aa)) is coil 1B. The interval 245–260 (QLGDRLNVEVDAAPPV) is linker 12. Residues 261–404 (DLNRVLNEMR…STYRGLLDSE (144 aa)) are coil 2. The tract at residues 405–455 (DCKLPCNPCAPDHSPSKSCLPCLPAASCGPGTAHTTCSPRPICVSCPGSRF) is tail.

The protein belongs to the intermediate filament family.

This Ovis aries (Sheep) protein is Keratin, type I cuticular Ha5.